The chain runs to 193 residues: Activity-regulated cytoskeleton associated protein 2 (193 aa).

Belongs to the ARC/ARG3.1 family. Homooligomer; homooligomerizes into virion-like capsids.

Its subcellular location is the extracellular vesicle membrane. In terms of biological role, self-assembles into virion-like capsids that encapsulate RNAs and mediate intercellular RNA transfer. Arc2 protein is released from cells in extracellular vesicles that mediate the transfer of mRNA into neighboring cells. The polypeptide is Activity-regulated cytoskeleton associated protein 2 (Drosophila melanogaster (Fruit fly)).